We begin with the raw amino-acid sequence, 859 residues long: Protein FAM171A1 (859 aa).

A signal peptide spans 1–20 (MSGSTAVALLFCVLSCSVWG). The Extracellular segment spans residues 21–307 (AGSKASHEHN…VTQDITSYHT (287 aa)). 3 N-linked (GlcNAc...) asparagine glycosylation sites follow: N163, N194, and N198. A helical membrane pass occupies residues 308-328 (IFLLAILGGIAFILLVLLCIL). Over 329–859 (LYYCRRKCLK…ERPLLAFNKK (531 aa)) the chain is Cytoplasmic. Disordered stretches follow at residues 397–421 (SRDFGSREELLSHQEEKSRMSLDNL), 484–509 (TNHVTAGSKPNIQEQMHPVPSAPEPE), and 771–859 (QSPS…FNKK). Positions 400 to 416 (FGSREELLSHQEEKSRM) are enriched in basic and acidic residues. 2 stretches are compositionally biased toward polar residues: residues 484–497 (TNHVTAGSKPNIQE) and 797–806 (SGSQTPSLQE). The span at 838 to 852 (GENKKSPWQKREERP) shows a compositional bias: basic and acidic residues.

Belongs to the FAM171 family.

The protein resides in the cell membrane. Its function is as follows. May be involved in the regulation of the cytoskeletal dynamics, plays a role in actin stress fiber formation. The protein is Protein FAM171A1 (fam171a1) of Xenopus laevis (African clawed frog).